The chain runs to 360 residues: MSQERPTFYRQELNKTVWEVPERYQNLSPVGSGAYGSVCAAFDTKTGHRVAVKKLSRPFQSIIHAKRTYRELRLLKHMKHENVIGLLDVFTPARSLEEFNDVYLVTHLMGADLNNIVKCQKLTDDHVQFLIYQILRGLKYIHSADIIHRDLKPSNLAVNEDCELKILDFGLARHTDDEMTGYVATRWYRAPEIMLNWMHYNQTVDIWSVGCIMAELLTGRTLFPGTDHIDQLKLILRLVGTPGAELLKKISSESARNYIQSLAQMPKMNFANVFIGANPLAVDLLEKMLVLDSDKRITAAQALAHAYFAQYHDPDDEPVAEPYDQSFESRDFLIDEWKSLTYDEVISFVPPPLDQEEMES.

Serine 2 is subject to N-acetylserine. Serine 2 is subject to Phosphoserine. The residue at position 16 (threonine 16) is a Phosphothreonine. The region spanning 24-308 (YQNLSPVGSG…AAQALAHAYF (285 aa)) is the Protein kinase domain. ATP is bound by residues 30–38 (VGSGAYGSV) and lysine 53. Lysine 53 bears the N6-acetyllysine mark. The Proton acceptor role is filled by aspartate 150. Residue lysine 152 is modified to N6-acetyllysine. Threonine 180 carries the phosphothreonine modification. The TXY motif lies at 180-182 (TGY). Tyrosine 182 is subject to Phosphotyrosine. A Phosphotyrosine; by ZAP70 modification is found at tyrosine 323.

It belongs to the protein kinase superfamily. CMGC Ser/Thr protein kinase family. MAP kinase subfamily. Component of a signaling complex containing at least AKAP13, PKN1, MAPK14, ZAK and MAP2K3. Within this complex, AKAP13 interacts directly with PKN1, which in turn recruits MAPK14, MAP2K3 and ZAK. Binds to a kinase interaction motif within the protein tyrosine phosphatase, PTPRR. This interaction retains MAPK14 in the cytoplasm and prevents nuclear accumulation. Interacts with SPAG9 and GADD45A. Interacts with CDC25B, CDC25C, DUSP1, DUSP10, DUSP16, NP60, SUPT20H and TAB1. Interacts with casein kinase II subunits CSNK2A1 and CSNK2B. Interacts with PPM1D. Interacts with CDK5RAP3; recruits PPM1D to MAPK14 and may regulate its dephosphorylation. Interacts with DUSP2; this interaction does not lead to catalytic activation of DUSP2 and dephosphrylation of MAPK14. The cofactor is Mg(2+). In terms of processing, dually phosphorylated on Thr-180 and Tyr-182 by the MAP2Ks MAP2K3/MKK3, MAP2K4/MKK4 and MAP2K6/MKK6 in response to inflammatory cytokines, environmental stress or growth factors, which activates the enzyme. Dual phosphorylation can also be mediated by TAB1-mediated autophosphorylation. TCR engagement in T-cells also leads to Tyr-323 phosphorylation by ZAP70. Dephosphorylated and inactivated by DUPS1, DUSP10 and DUSP16. PPM1D also mediates dephosphorylation and inactivation of MAPK14. Acetylated at Lys-53 and Lys-152 by KAT2B and EP300. Acetylation at Lys-53 increases the affinity for ATP and enhances kinase activity. Lys-53 and Lys-152 are deacetylated by HDAC3. Post-translationally, ubiquitinated. Ubiquitination leads to degradation by the proteasome pathway.

The protein localises to the cytoplasm. It is found in the nucleus. It carries out the reaction L-seryl-[protein] + ATP = O-phospho-L-seryl-[protein] + ADP + H(+). The catalysed reaction is L-threonyl-[protein] + ATP = O-phospho-L-threonyl-[protein] + ADP + H(+). Activated by cell stresses such as DNA damage, heat shock, osmotic shock, anisomycin and sodium arsenite, as well as pro-inflammatory stimuli such as bacterial lipopolysaccharide (LPS) and interleukin-1. Activation occurs through dual phosphorylation of Thr-180 and Tyr-182 by either of two dual specificity kinases, MAP2K3/MKK3 or MAP2K6/MKK6, and potentially also MAP2K4/MKK4, as well as by TAB1-mediated autophosphorylation. MAPK14 phosphorylated on both Thr-180 and Tyr-182 is 10-20-fold more active than MAPK14 phosphorylated only on Thr-180, whereas MAPK14 phosphorylated on Tyr-182 alone is inactive. whereas Thr-180 is necessary for catalysis, Tyr-182 may be required for auto-activation and substrate recognition. Phosphorylated at Tyr-323 by ZAP70 in an alternative activation pathway in response to TCR signaling in T-cells. This alternative pathway is inhibited by GADD45A. Inhibited by dual specificity phosphatases, such as DUSP1, DUSP10, and DUSP16. Specifically inhibited by the binding of pyridinyl-imidazole compounds, which are cytokine-suppressive anti-inflammatory drugs (CSAID). SB203580 is an inhibitor of MAPK14. Serine/threonine kinase which acts as an essential component of the MAP kinase signal transduction pathway. MAPK14 is one of the four p38 MAPKs which play an important role in the cascades of cellular responses evoked by extracellular stimuli such as pro-inflammatory cytokines or physical stress leading to direct activation of transcription factors. Accordingly, p38 MAPKs phosphorylate a broad range of proteins and it has been estimated that they may have approximately 200 to 300 substrates each. Some of the targets are downstream kinases which are activated through phosphorylation and further phosphorylate additional targets. RPS6KA5/MSK1 and RPS6KA4/MSK2 can directly phosphorylate and activate transcription factors such as CREB1, ATF1, the NF-kappa-B isoform RELA/NFKB3, STAT1 and STAT3, but can also phosphorylate histone H3 and the nucleosomal protein HMGN1. RPS6KA5/MSK1 and RPS6KA4/MSK2 play important roles in the rapid induction of immediate-early genes in response to stress or mitogenic stimuli, either by inducing chromatin remodeling or by recruiting the transcription machinery. On the other hand, two other kinase targets, MAPKAPK2/MK2 and MAPKAPK3/MK3, participate in the control of gene expression mostly at the post-transcriptional level, by phosphorylating ZFP36 (tristetraprolin) and ELAVL1, and by regulating EEF2K, which is important for the elongation of mRNA during translation. MKNK1/MNK1 and MKNK2/MNK2, two other kinases activated by p38 MAPKs, regulate protein synthesis by phosphorylating the initiation factor EIF4E2. MAPK14 also interacts with casein kinase II, leading to its activation through autophosphorylation and further phosphorylation of TP53/p53. In the cytoplasm, the p38 MAPK pathway is an important regulator of protein turnover. For example, CFLAR is an inhibitor of TNF-induced apoptosis whose proteasome-mediated degradation is regulated by p38 MAPK phosphorylation. In a similar way, MAPK14 phosphorylates the ubiquitin ligase SIAH2, regulating its activity towards EGLN3. MAPK14 may also inhibit the lysosomal degradation pathway of autophagy by interfering with the intracellular trafficking of the transmembrane protein ATG9. Another function of MAPK14 is to regulate the endocytosis of membrane receptors by different mechanisms that impinge on the small GTPase RAB5A. In addition, clathrin-mediated EGFR internalization induced by inflammatory cytokines and UV irradiation depends on MAPK14-mediated phosphorylation of EGFR itself as well as of RAB5A effectors. Ectodomain shedding of transmembrane proteins is regulated by p38 MAPKs as well. In response to inflammatory stimuli, p38 MAPKs phosphorylate the membrane-associated metalloprotease ADAM17. Such phosphorylation is required for ADAM17-mediated ectodomain shedding of TGF-alpha family ligands, which results in the activation of EGFR signaling and cell proliferation. Another p38 MAPK substrate is FGFR1. FGFR1 can be translocated from the extracellular space into the cytosol and nucleus of target cells, and regulates processes such as rRNA synthesis and cell growth. FGFR1 translocation requires p38 MAPK activation. In the nucleus, many transcription factors are phosphorylated and activated by p38 MAPKs in response to different stimuli. Classical examples include ATF1, ATF2, ATF6, ELK1, PTPRH, DDIT3, TP53/p53 and MEF2C and MEF2A. The p38 MAPKs are emerging as important modulators of gene expression by regulating chromatin modifiers and remodelers. The promoters of several genes involved in the inflammatory response, such as IL6, IL8 and IL12B, display a p38 MAPK-dependent enrichment of histone H3 phosphorylation on 'Ser-10' (H3S10ph) in LPS-stimulated myeloid cells. This phosphorylation enhances the accessibility of the cryptic NF-kappa-B-binding sites marking promoters for increased NF-kappa-B recruitment. Phosphorylates CDC25B and CDC25C which is required for binding to 14-3-3 proteins and leads to initiation of a G2 delay after ultraviolet radiation. Phosphorylates TIAR following DNA damage, releasing TIAR from GADD45A mRNA and preventing mRNA degradation. The p38 MAPKs may also have kinase-independent roles, which are thought to be due to the binding to targets in the absence of phosphorylation. Protein O-Glc-N-acylation catalyzed by the OGT is regulated by MAPK14, and, although OGT does not seem to be phosphorylated by MAPK14, their interaction increases upon MAPK14 activation induced by glucose deprivation. This interaction may regulate OGT activity by recruiting it to specific targets such as neurofilament H, stimulating its O-Glc-N-acylation. Required in mid-fetal development for the growth of embryo-derived blood vessels in the labyrinth layer of the placenta. Also plays an essential role in developmental and stress-induced erythropoiesis, through regulation of EPO gene expression. Phosphorylates S100A9 at 'Thr-113'. This is Mitogen-activated protein kinase 14 from Rattus norvegicus (Rat).